Reading from the N-terminus, the 360-residue chain is GDSL esterase/lipase At2g31540 (360 aa).

The first 23 residues, 1–23, serve as a signal peptide directing secretion; it reads MSTSKAITLTLFIATTLLAPCNA. Catalysis depends on Ser42, which acts as the Nucleophile. N-linked (GlcNAc...) asparagine glycosylation is found at Asn104 and Asn326. Catalysis depends on residues Asp334 and His337.

This sequence belongs to the 'GDSL' lipolytic enzyme family.

The protein resides in the secreted. The chain is GDSL esterase/lipase At2g31540 from Arabidopsis thaliana (Mouse-ear cress).